The chain runs to 212 residues: Octanoyltransferase (212 aa).

Residues Ala-31 to Ile-209 form the BPL/LPL catalytic domain. Residues Arg-70–His-77, Ser-138–Gly-140, and Gly-151–Ala-153 contribute to the substrate site. Residue Cys-169 is the Acyl-thioester intermediate of the active site.

It belongs to the LipB family.

Its subcellular location is the cytoplasm. The catalysed reaction is octanoyl-[ACP] + L-lysyl-[protein] = N(6)-octanoyl-L-lysyl-[protein] + holo-[ACP] + H(+). It participates in protein modification; protein lipoylation via endogenous pathway; protein N(6)-(lipoyl)lysine from octanoyl-[acyl-carrier-protein]: step 1/2. In terms of biological role, catalyzes the transfer of endogenously produced octanoic acid from octanoyl-acyl-carrier-protein onto the lipoyl domains of lipoate-dependent enzymes. Lipoyl-ACP can also act as a substrate although octanoyl-ACP is likely to be the physiological substrate. This Haemophilus influenzae (strain ATCC 51907 / DSM 11121 / KW20 / Rd) protein is Octanoyltransferase.